The primary structure comprises 422 residues: UDP-N-acetylglucosamine 1-carboxyvinyltransferase (422 aa).

22–23 lines the phosphoenolpyruvate pocket; that stretch reads KN. R95 serves as a coordination point for UDP-N-acetyl-alpha-D-glucosamine. The active-site Proton donor is C119. Position 119 is a 2-(S-cysteinyl)pyruvic acid O-phosphothioketal (C119). UDP-N-acetyl-alpha-D-glucosamine is bound by residues 124–128, D309, and V331; that span reads RPIDQ.

The protein belongs to the EPSP synthase family. MurA subfamily.

The protein resides in the cytoplasm. The catalysed reaction is phosphoenolpyruvate + UDP-N-acetyl-alpha-D-glucosamine = UDP-N-acetyl-3-O-(1-carboxyvinyl)-alpha-D-glucosamine + phosphate. Its pathway is cell wall biogenesis; peptidoglycan biosynthesis. Its function is as follows. Cell wall formation. Adds enolpyruvyl to UDP-N-acetylglucosamine. The chain is UDP-N-acetylglucosamine 1-carboxyvinyltransferase from Anaeromyxobacter dehalogenans (strain 2CP-1 / ATCC BAA-258).